The primary structure comprises 1200 residues: Chromosome partition protein Smc (1200 aa).

Position 33 to 40 (33 to 40) interacts with ATP; sequence PNGSGKSN. The tract at residues 90 to 109 is disordered; the sequence is GENLSEPGANHNGNGNGAKI. Residues 202–528 are a coiled coil; sequence EVQDREERCQ…AASQAQQEVQ (327 aa). In terms of domain architecture, SMC hinge spans 542–656; the sequence is PGVCGLVAQL…VFDTLVNARN (115 aa). Positions 692–1046 form a coiled coil; the sequence is TMVSEDTAEV…ERTELLLRIE (355 aa).

The protein belongs to the SMC family. As to quaternary structure, homodimer.

It is found in the cytoplasm. In terms of biological role, required for chromosome condensation and partitioning. This is Chromosome partition protein Smc from Synechocystis sp. (strain ATCC 27184 / PCC 6803 / Kazusa).